Reading from the N-terminus, the 220-residue chain is Large ribosomal subunit protein uL16 (220 aa).

The protein belongs to the universal ribosomal protein uL16 family. As to quaternary structure, component of the small ribosomal subunit. Mature ribosomes consist of a small (40S) and a large (60S) subunit. The 40S subunit contains about 33 different proteins and 1 molecule of RNA (18S). The 60S subunit contains about 49 different proteins and 3 molecules of RNA (25S, 5.8S and 5S).

The protein is Large ribosomal subunit protein uL16 (RPL10) of Zea mays (Maize).